Consider the following 880-residue polypeptide: Leucine--tRNA ligase (880 aa).

The 'HIGH' region motif lies at P49–H59. A 'KMSKS' region motif is present at residues K638–S642. An ATP-binding site is contributed by K641.

It belongs to the class-I aminoacyl-tRNA synthetase family.

It localises to the cytoplasm. The enzyme catalyses tRNA(Leu) + L-leucine + ATP = L-leucyl-tRNA(Leu) + AMP + diphosphate. The sequence is that of Leucine--tRNA ligase from Bartonella quintana (strain Toulouse) (Rochalimaea quintana).